Consider the following 690-residue polypeptide: Lipase 2 (690 aa).

A signal peptide spans 1 to 37; that stretch reads MLRGQEERKYSIRKYSIGVVSVLAATMFVVSSHEAQA. A propeptide spanning residues 38 to 295 is cleaved from the precursor; that stretch reads SEKTPTNAAV…ADAKKVRPLK (258 aa). Polar residues predominate over residues 53 to 71; that stretch reads NQPGEQGNAITSHQMQSGK. Residues 53–266 form a disordered region; the sequence is NQPGEQGNAI…KPTDKNTDNK (214 aa). Residues 72–81 are compositionally biased toward basic and acidic residues; it reads QLDDMHKENG. Composition is skewed to polar residues over residues 93–114, 124–171, and 185–206; these read LQLS…NDNQ, SKQS…QPSI, and PTST…AQDA. Basic and acidic residues-rich tracts occupy residues 225–237 and 257–266; these read IDAK…RQSE and KPTDKNTDNK. Catalysis depends on Ser-412, which acts as the Nucleophile. Gly-579 lines the Ca(2+) pocket. Asp-603 (charge relay system) is an active-site residue. Asp-644 contacts Ca(2+). His-645 functions as the Charge relay system in the catalytic mechanism. Ca(2+) contacts are provided by Asp-647, Asp-652, and Asp-655.

Belongs to the AB hydrolase superfamily. Lipase family.

It localises to the secreted. The catalysed reaction is a triacylglycerol + H2O = a diacylglycerol + a fatty acid + H(+). This Staphylococcus aureus (strain MSSA476) protein is Lipase 2 (lip2).